The sequence spans 186 residues: Testis-expressed protein 29 (186 aa).

At 1–56 the chain is on the extracellular side; that stretch reads MKDTKEIKRSPPHLLKKFAVCDIPLYDICDYNVTRERCRSLDCCFYRGVCYEKAVP. The chain crosses the membrane as a helical span at residues 57–77; sequence IYVQVFFTLIWFVAGAFIIAV. At 78–151 the chain is on the cytoplasmic side; sequence IYRVIQGTKK…AGCCLWMKSK (74 aa). Disordered stretches follow at residues 104 to 138 and 151 to 186; these read SPTPELIPEPIPEPIPEPIPEPIREPPPPVKKTES and KPAKDQPQKETAAPEPPSNPEVKKVNSGSAVPQAAP. A compositionally biased stretch (pro residues) spans 108–133; it reads ELIPEPIPEPIPEPIPEPIREPPPPV.

It is found in the membrane. The protein is Testis-expressed protein 29 (Tex29) of Mus musculus (Mouse).